The primary structure comprises 82 residues: U10-myrmicitoxin-Mri1c (82 aa).

The signal sequence occupies residues 1-26 (MRLSYVSLTLAIIFVMAIVHAPETEA). Positions 27-52 (KAYPEADAVGEASAVGEADAVGVADP) are excised as a propeptide. The residue at position 81 (isoleucine 81) is an Isoleucine amide.

It belongs to the formicidae venom precursor-01 superfamily. As to expression, expressed by the venom gland.

It localises to the secreted. Functionally, induces paralysis 5 minutes after injection into blowflies (L.caesar). In most cases is not lethal 24 hours after injection, but paralysis is irreversible. May have antimicrobial properties, like most ant linear peptides. The polypeptide is U10-myrmicitoxin-Mri1c (Manica rubida (European giant red ant)).